Consider the following 318-residue polypeptide: Pantothenate kinase (318 aa).

96-103 (GSVSVGKS) is an ATP binding site.

The protein belongs to the prokaryotic pantothenate kinase family.

The protein resides in the cytoplasm. It catalyses the reaction (R)-pantothenate + ATP = (R)-4'-phosphopantothenate + ADP + H(+). The protein operates within cofactor biosynthesis; coenzyme A biosynthesis; CoA from (R)-pantothenate: step 1/5. This is Pantothenate kinase from Bradyrhizobium sp. (strain ORS 278).